Reading from the N-terminus, the 139-residue chain is Putative nickel-responsive regulator (139 aa).

4 residues coordinate Ni(2+): His-79, His-90, His-92, and Cys-98.

The protein belongs to the transcriptional regulatory CopG/NikR family. Ni(2+) is required as a cofactor.

In terms of biological role, transcriptional regulator. The polypeptide is Putative nickel-responsive regulator (Solibacter usitatus (strain Ellin6076)).